Here is a 386-residue protein sequence, read N- to C-terminus: Na(+)/H(+) antiporter NhaA (386 aa).

Helical transmembrane passes span 10–30 (EFSI…NVAP), 45–65 (LSFH…IAAV), 84–104 (LNPL…YLAL), 116–136 (GWGI…RLIF), 142–162 (VIAF…VIIA), 169–189 (VLPV…IAFI), 261–281 (IIVD…GFSA), 287–307 (WLVF…FALL), 323–343 (HLLV…FVAG), and 358–378 (GAIL…LLGI).

Belongs to the NhaA Na(+)/H(+) (TC 2.A.33) antiporter family.

It is found in the cell inner membrane. It carries out the reaction Na(+)(in) + 2 H(+)(out) = Na(+)(out) + 2 H(+)(in). Na(+)/H(+) antiporter that extrudes sodium in exchange for external protons. This is Na(+)/H(+) antiporter NhaA from Geotalea uraniireducens (strain Rf4) (Geobacter uraniireducens).